Reading from the N-terminus, the 551-residue chain is Glucans biosynthesis protein D (551 aa).

Positions 1–32 form a signal peptide, tat-type signal; it reads MDRRRFIKGSMAMAAVCGTSGIASLFSQAAFA.

The protein belongs to the OpgD/OpgG family. Post-translationally, predicted to be exported by the Tat system. The position of the signal peptide cleavage has not been experimentally proven.

Its subcellular location is the periplasm. It functions in the pathway glycan metabolism; osmoregulated periplasmic glucan (OPG) biosynthesis. Functionally, probably involved in the control of the structural glucose backbone of osmoregulated periplasmic glucans (OPGs). This chain is Glucans biosynthesis protein D, found in Escherichia coli O9:H4 (strain HS).